A 184-amino-acid chain; its full sequence is ATP synthase subunit delta (184 aa).

Belongs to the ATPase delta chain family. F-type ATPases have 2 components, F(1) - the catalytic core - and F(0) - the membrane proton channel. F(1) has five subunits: alpha(3), beta(3), gamma(1), delta(1), epsilon(1). F(0) has three main subunits: a(1), b(2) and c(10-14). The alpha and beta chains form an alternating ring which encloses part of the gamma chain. F(1) is attached to F(0) by a central stalk formed by the gamma and epsilon chains, while a peripheral stalk is formed by the delta and b chains.

Its subcellular location is the cell inner membrane. Functionally, f(1)F(0) ATP synthase produces ATP from ADP in the presence of a proton or sodium gradient. F-type ATPases consist of two structural domains, F(1) containing the extramembraneous catalytic core and F(0) containing the membrane proton channel, linked together by a central stalk and a peripheral stalk. During catalysis, ATP synthesis in the catalytic domain of F(1) is coupled via a rotary mechanism of the central stalk subunits to proton translocation. Its function is as follows. This protein is part of the stalk that links CF(0) to CF(1). It either transmits conformational changes from CF(0) to CF(1) or is implicated in proton conduction. The protein is ATP synthase subunit delta of Rickettsia conorii (strain ATCC VR-613 / Malish 7).